The chain runs to 487 residues: Fatty acid desaturase 2-like protein FADS2B (487 aa).

The span at 1–11 (MKLEEKLEHNE) shows a compositional bias: basic and acidic residues. The segment at 1-20 (MKLEEKLEHNESLVGKSRPC) is disordered. The Cytoplasmic portion of the chain corresponds to 1–175 (MKLEEKLEHN…AMNMFSANLR (175 aa)). The 78-residue stretch at 62 to 139 (LNLYTWQEIQ…LKPLLIGELS (78 aa)) folds into the Cytochrome b5 heme-binding domain. Histidine 97 and histidine 120 together coordinate heme. Residues 176–196 (FFFLHLAQILILEISAWLILH) form a helical membrane-spanning segment. Residues 197-201 (HFGSS) are Lumenal-facing. A helical membrane pass occupies residues 202 to 222 (WLVTILISFLLTVSQAQCSFL). Residues 223–307 (QHDLGHLSMF…IKYIDYEKQH (85 aa)) are Cytoplasmic-facing. A Histidine box-1 motif is present at residues 224-228 (HDLGH). The short motif at 261 to 265 (HFQHH) is the Histidine box-2 element. The helical transmembrane segment at 308–328 (LYFYMVALPFLMPVYFNLQSM) threads the bilayer. Topologically, residues 329 to 349 (QVMYLRKYWMDIAWVSSFYIR) are lumenal. The helical transmembrane segment at 350–370 (YFITFGPFYGIFGTVLLIYLV) threads the bilayer. Topologically, residues 371–487 (KFIESPWIAY…ASLWMNAYYE (117 aa)) are cytoplasmic. The short motif at 426–430 (QIEHH) is the Histidine box-3 element.

This sequence belongs to the fatty acid desaturase type 1 family.

The protein localises to the endoplasmic reticulum membrane. Its pathway is lipid metabolism; polyunsaturated fatty acid biosynthesis. The sequence is that of Fatty acid desaturase 2-like protein FADS2B from Mus musculus (Mouse).